A 467-amino-acid polypeptide reads, in one-letter code: Mothers against decapentaplegic homolog 2 (467 aa).

Position 2 is an N-acetylserine (Ser2). The residue at position 8 (Thr8) is a Phosphothreonine. The MH1 domain maps to 10–176 (PVVKRLLGWK…YQRVETPVLP (167 aa)). Lys19 is subject to N6-acetyllysine. Zn(2+)-binding residues include Cys74, Cys149, Cys161, and His166. Over residues 207-217 (PAGIEPQSNYI) the composition is skewed to polar residues. The interval 207 to 251 (PAGIEPQSNYIPETPPPGYISEDGETSDQQLNQSMDTGSPAELSP) is disordered. Residue Thr220 is modified to Phosphothreonine. Positions 221–225 (PPPGY) match the PY-motif motif. The segment covering 233–243 (SDQQLNQSMDT) has biased composition (polar residues). At Ser240 the chain carries Phosphoserine; by CAMK2. 6 positions are modified to phosphoserine: Ser245, Ser250, Ser255, Ser458, Ser460, and Ser464. The MH2 domain occupies 274-467 (WCSIAYYELN…SPSVRCSSMS (194 aa)). 2 positions are modified to phosphoserine; by TGFBR1: Ser465 and Ser467.

The protein belongs to the dwarfin/SMAD family. As to quaternary structure, monomer; in the absence of TGF-beta. Heterodimer; in the presence of TGF-beta. Forms a heterodimer with co-SMAD, SMAD4, in the nucleus to form the transactivation complex SMAD2/SMAD4. Found in a complex with SMAD3 and TRIM33 upon addition of TGF-beta. Identified in a complex that contains at least ZNF451, SMAD2, SMAD3 and SMAD4. Interacts (via the MH2 domain) with ZFYVE9; may form trimers with the SMAD4 co-SMAD. Interacts with TAZ/WWRT1. Interacts with FOXH1. Interacts with SNW1. Interacts with CREB-binding protein (CBP) and EP300. Interacts with SNON. Interacts with ALK4/ACVR1B. Interacts with SKOR1. Interacts with SKOR2. Interacts with PRDM16. Interacts (via MH2 domain) with LEMD3. Interacts with RBPMS. Interacts with WWP1. Interacts (dephosphorylated form, via the MH1 and MH2 domains) with RANBP3 (via its C-terminal R domain); the interaction results in the export of dephosphorylated SMAD3 out of the nucleus and termination of the TGF-beta signaling. Interacts with PDPK1 (via PH domain). Interacts with DAB2; the interactions are enhanced upon TGF-beta stimulation. Interacts with USP15. Interacts with PPP5C. Interacts with LDLRAD4 (via the SMAD interaction motif). Interacts (via MH2 domain) with PMEPA1 (via the SMAD interaction motif). Interacts with ZFHX3. Interacts with ZNF451. Interacts with SMURF2 when phosphorylated on Ser-465/467. Interacts with PPM1A. Interacts with TGF-beta. Interacts with TGFBR1. Interacts with TGIF. Interacts with SMAD3 and TRIM33. Interacts with ZNF580. Interacts with NEDD4L in response to TGF-beta. Interacts with HGS. Interacts with AIP1. Interacts with WWP1. Interacts with PML. Interacts weakly with ZNF8. Interacts (when phosphorylated) with RNF111; RNF111 acts as an enhancer of the transcriptional responses by mediating ubiquitination and degradation of SMAD2 inhibitors. Interacts with YAP1 (when phosphorylated at 'Ser-55'). Interacts when phosphorylated with IPO7; the interaction facilitates translocation of SMAD2 to the nucleus. Interacts with MTMR4; negatively regulates TGF-beta signaling through SMAD2 dephosphorylation and retention in endosomes. In response to TGF-beta, phosphorylated on the C-terminal SXS motif by TGF-beta and activin type 1 receptor kinases, phosphorylation declines progressively in a KMT5A-dependent manner. Phosphorylation in this motif is required for interaction with a number of proteins including SMURF2, SNON and SMAD4 in response to TGF-beta. Dephosphorylated in this motif by PPM1A leading to disruption of the SMAD2/3-SMAD4 complex, nuclear export and termination of the TGF-beta signaling. In response to decorin, the naturally occurring inhibitor of TGF-beta signaling, phosphorylated on Ser-240 by CaMK2. Phosphorylated by MAPK3 upon EGF stimulation; which increases transcriptional activity and stability, and is blocked by calmodulin. Phosphorylated by PDPK1. In terms of processing, acetylated on Lys-19 by coactivators in response to TGF-beta signaling, which increases transcriptional activity. Post-translationally, in response to TGF-beta, ubiquitinated by NEDD4L; which promotes its degradation. Monoubiquitinated, leading to prevent DNA-binding. Deubiquitination by USP15 alleviates inhibition and promotes activation of TGF-beta target genes. Ubiquitinated by RNF111, leading to its degradation: only SMAD2 proteins that are 'in use' are targeted by RNF111, RNF111 playing a key role in activating SMAD2 and regulating its turnover.

The protein resides in the cytoplasm. It is found in the nucleus. Its function is as follows. Receptor-regulated SMAD (R-SMAD) that is an intracellular signal transducer and transcriptional modulator activated by TGF-beta (transforming growth factor) and activin type 1 receptor kinases. Binds the TRE element in the promoter region of many genes that are regulated by TGF-beta and, on formation of the SMAD2/SMAD4 complex, activates transcription. Promotes TGFB1-mediated transcription of odontoblastic differentiation genes in dental papilla cells. Positively regulates PDPK1 kinase activity by stimulating its dissociation from the 14-3-3 protein YWHAQ which acts as a negative regulator. In Bos taurus (Bovine), this protein is Mothers against decapentaplegic homolog 2 (SMAD2).